The following is a 91-amino-acid chain: Probable Fe(2+)-trafficking protein (91 aa).

It belongs to the Fe(2+)-trafficking protein family.

Could be a mediator in iron transactions between iron acquisition and iron-requiring processes, such as synthesis and/or repair of Fe-S clusters in biosynthetic enzymes. This is Probable Fe(2+)-trafficking protein from Polynucleobacter necessarius subsp. necessarius (strain STIR1).